We begin with the raw amino-acid sequence, 701 residues long: Kinesin-like protein KIN-10C (701 aa).

The Kinesin motor domain maps to 8-318 (VVRVVARVKP…LNLASRICLG (311 aa)). Residue 94-101 (GARNSGKT) coordinates ATP.

It belongs to the TRAFAC class myosin-kinesin ATPase superfamily. Kinesin family. KIN-10 subfamily.

The chain is Kinesin-like protein KIN-10C from Arabidopsis thaliana (Mouse-ear cress).